We begin with the raw amino-acid sequence, 576 residues long: Acetylcholine receptor subunit alpha-like 2 (576 aa).

Residues 1–21 form the signal peptide; the sequence is MAPGCCTTRPRPIALLAHIWR. At 22 to 261 the chain is on the extracellular side; it reads HCKPLCLLLV…FFNITLRRKT (240 aa). Asparagine 65 is a glycosylation site (N-linked (GlcNAc...) asparagine). 2 cysteine pairs are disulfide-bonded: cysteine 169–cysteine 183 and cysteine 243–cysteine 244. Asparagine 254 carries N-linked (GlcNAc...) asparagine glycosylation. 3 helical membrane passes run 262-285, 293-311, and 327-346; these read LFYT…VFYL, IALC…LLIS, and YLLF…IIIL. Residues 347–526 lie on the Cytoplasmic side of the membrane; sequence NIHYRKPSTH…WGFVAMVMDR (180 aa). A helical transmembrane segment spans residues 527–545; the sequence is LFLWLFMIASLVGTFVILG. Asparagine 570 carries an N-linked (GlcNAc...) asparagine glycan.

This sequence belongs to the ligand-gated ion channel (TC 1.A.9) family. Acetylcholine receptor (TC 1.A.9.1) subfamily. CNS in embryos.

It localises to the postsynaptic cell membrane. The protein localises to the cell membrane. After binding acetylcholine, the AChR responds by an extensive change in conformation that affects all subunits and leads to opening of an ion-conducting channel across the plasma membrane. The protein is Acetylcholine receptor subunit alpha-like 2 (nAChRalpha2) of Drosophila melanogaster (Fruit fly).